Here is a 127-residue protein sequence, read N- to C-terminus: Fluoride-specific ion channel FluC (127 aa).

Transmembrane regions (helical) follow at residues 4–24, 35–55, 71–91, and 103–123; these read LLLAVFIGGGTGSVARWLLSM, LGTLAANLIGAFIIGMGFAWF, TGFCGGLTTFSTFSAEVVFLL, and VFVNLLGSFAMTALAFWLFSA. 2 residues coordinate Na(+): glycine 75 and threonine 78.

It belongs to the fluoride channel Fluc/FEX (TC 1.A.43) family.

Its subcellular location is the cell inner membrane. The enzyme catalyses fluoride(in) = fluoride(out). With respect to regulation, na(+) is not transported, but it plays an essential structural role and its presence is essential for fluoride channel function. In terms of biological role, fluoride-specific ion channel. Important for reducing fluoride concentration in the cell, thus reducing its toxicity. The sequence is that of Fluoride-specific ion channel FluC from Shigella flexneri serotype 5b (strain 8401).